The chain runs to 305 residues: Ribonuclease H (305 aa).

The catalysed reaction is Endonucleolytic cleavage to 5'-phosphomonoester.. Its function is as follows. Plays essential roles in DNA replication by removing the RNA primers from lagging strand fragments. Exhibits 5'to 3' exonuclease activity on either RNA/DNA or DNA/DNA duplexes and endonuclease activity on either flap or fork DNA structures. The protein is Ribonuclease H (rnh) of Enterobacteria phage T4 (Bacteriophage T4).